The chain runs to 123 residues: Large ribosomal subunit protein bL12 (123 aa).

The protein belongs to the bacterial ribosomal protein bL12 family. As to quaternary structure, homodimer. Part of the ribosomal stalk of the 50S ribosomal subunit. Forms a multimeric L10(L12)X complex, where L10 forms an elongated spine to which 2 to 4 L12 dimers bind in a sequential fashion. Binds GTP-bound translation factors.

Its function is as follows. Forms part of the ribosomal stalk which helps the ribosome interact with GTP-bound translation factors. Is thus essential for accurate translation. This chain is Large ribosomal subunit protein bL12, found in Neisseria meningitidis serogroup C (strain 053442).